The following is a 204-amino-acid chain: FMN-dependent NADH:quinone oxidoreductase 1 (204 aa).

Residues S10 and 15 to 17 (SLS) each bind FMN.

This sequence belongs to the azoreductase type 1 family. In terms of assembly, homodimer. FMN serves as cofactor.

The catalysed reaction is 2 a quinone + NADH + H(+) = 2 a 1,4-benzosemiquinone + NAD(+). The enzyme catalyses N,N-dimethyl-1,4-phenylenediamine + anthranilate + 2 NAD(+) = 2-(4-dimethylaminophenyl)diazenylbenzoate + 2 NADH + 2 H(+). Quinone reductase that provides resistance to thiol-specific stress caused by electrophilic quinones. Its function is as follows. Also exhibits azoreductase activity. Catalyzes the reductive cleavage of the azo bond in aromatic azo compounds to the corresponding amines. The sequence is that of FMN-dependent NADH:quinone oxidoreductase 1 from Rhizobium etli (strain ATCC 51251 / DSM 11541 / JCM 21823 / NBRC 15573 / CFN 42).